The following is a 304-amino-acid chain: MLNQLQRDILRLKKEKNAIILAHNYQSREIQEIADFKGDSLELCIEASRIEGKDIVVFCGVDFMAETAYILNPDKKILIPDRGAECPMAHMLSAEDVRMARKRYPDAAVVLYVNTLAEAKAEADILCTSANAVRVVESLDEDLVLFGPDRNLAWYVQEHTDKTIIPIPEEGHCYVHKMFTAGDVMAAKEKYPEAELLIHPECDPEVQELADHILSTGGMLRRVLESDAESFIIGTEVDMTTRISLESDKKTIPLLEEAICENMKLHTLEKVKNSLINEEFVVTVPDEIARRARRAVERMIRVSE.

Residues H23 and S40 each coordinate iminosuccinate. Position 86 (C86) interacts with [4Fe-4S] cluster. Residues 112–114 (YVN) and S129 each bind iminosuccinate. C173 lines the [4Fe-4S] cluster pocket. Iminosuccinate contacts are provided by residues 199–201 (HPE) and T216. Residue C260 coordinates [4Fe-4S] cluster.

The protein belongs to the quinolinate synthase family. Type 2 subfamily. The cofactor is [4Fe-4S] cluster.

The protein localises to the cytoplasm. It carries out the reaction iminosuccinate + dihydroxyacetone phosphate = quinolinate + phosphate + 2 H2O + H(+). It functions in the pathway cofactor biosynthesis; NAD(+) biosynthesis; quinolinate from iminoaspartate: step 1/1. Functionally, catalyzes the condensation of iminoaspartate with dihydroxyacetone phosphate to form quinolinate. This chain is Quinolinate synthase, found in Methanothermobacter thermautotrophicus (strain ATCC 29096 / DSM 1053 / JCM 10044 / NBRC 100330 / Delta H) (Methanobacterium thermoautotrophicum).